Reading from the N-terminus, the 428-residue chain is Histidine--tRNA ligase (428 aa).

This sequence belongs to the class-II aminoacyl-tRNA synthetase family.

Its subcellular location is the cytoplasm. The catalysed reaction is tRNA(His) + L-histidine + ATP = L-histidyl-tRNA(His) + AMP + diphosphate + H(+). The protein is Histidine--tRNA ligase of Korarchaeum cryptofilum (strain OPF8).